The primary structure comprises 317 residues: Secreted frizzled-related protein 5 (317 aa).

The signal sequence occupies residues 1–29 (MRAAAAGGGVRTAALALLLGALHWAPARC). An FZ domain is found at 48-165 (SKPPQCLDIP…PLDNDLCIAV (118 aa)). 8 disulfides stabilise this stretch: Cys-53–Cys-116, Cys-63–Cys-109, Cys-100–Cys-135, Cys-124–Cys-162, Cys-128–Cys-152, Cys-181–Cys-253, Cys-184–Cys-255, and Cys-198–Cys-303. The NTR domain occupies 181–303 (CAQCEMEHSA…AVKFMFSYPC (123 aa)).

This sequence belongs to the secreted frizzled-related protein (sFRP) family. Highly expressed in the retinal pigment epithelium (RPE) and pancreas. Weak expression in heart, liver and muscle.

Its subcellular location is the secreted. Functionally, soluble frizzled-related proteins (sFRPS) function as modulators of Wnt signaling through direct interaction with Wnts. They have a role in regulating cell growth and differentiation in specific cell types. SFRP5 may be involved in determining the polarity of photoreceptor, and perhaps, other cells in the retina. In Homo sapiens (Human), this protein is Secreted frizzled-related protein 5 (SFRP5).